Reading from the N-terminus, the 281-residue chain is Biotin synthase (281 aa).

Residues 1 to 230 (MNQKIFLCSI…AQRIMVAGGR (230 aa)) form the Radical SAM core domain. [4Fe-4S] cluster-binding residues include cysteine 18, cysteine 22, and cysteine 25. [2Fe-2S] cluster is bound by residues cysteine 62, cysteine 97, and arginine 223.

The protein belongs to the radical SAM superfamily. Biotin synthase family. As to quaternary structure, homodimer. The cofactor is [4Fe-4S] cluster. It depends on [2Fe-2S] cluster as a cofactor.

It carries out the reaction (4R,5S)-dethiobiotin + (sulfur carrier)-SH + 2 reduced [2Fe-2S]-[ferredoxin] + 2 S-adenosyl-L-methionine = (sulfur carrier)-H + biotin + 2 5'-deoxyadenosine + 2 L-methionine + 2 oxidized [2Fe-2S]-[ferredoxin]. Its pathway is cofactor biosynthesis; biotin biosynthesis; biotin from 7,8-diaminononanoate: step 2/2. In terms of biological role, catalyzes the conversion of dethiobiotin (DTB) to biotin by the insertion of a sulfur atom into dethiobiotin via a radical-based mechanism. The sequence is that of Biotin synthase from Sulfurimonas denitrificans (strain ATCC 33889 / DSM 1251) (Thiomicrospira denitrificans (strain ATCC 33889 / DSM 1251)).